Consider the following 356-residue polypeptide: Septin-12 (356 aa).

Residues 1–23 are disordered; the sequence is MDERRTPSPCSSRPSSPRTPPCE. Residues 7-16 show a composition bias toward low complexity; sequence PSPCSSRPSS. The region spanning 44 to 315 is the Septin-type G domain; the sequence is TGFEFNIMVV…ENYRVLRLNE (272 aa). An interaction with SEPTIN7 region spans residues 44-317; it reads TGFEFNIMVV…YRVLRLNESH (274 aa). The tract at residues 54–61 is G1 motif; the sequence is GQSGLGKS. GTP-binding positions include 54-61, T87, G113, 193-201, G249, and R264; these read GQSGLGKS and RADSLTIEE. Residues 110-113 form a G3 motif region; it reads DTPG. Residues 192-195 form a G4 motif region; it reads ARAD. A self-association (via N-terminus) to polymerize octameric septin 12-7-6-2/4-2/4-6-7-12 filaments region spans residues 256 to 356; sequence VNGRCVLGRK…RSKDPRDDEC (101 aa). Residues 330–356 form a disordered region; sequence PASPGQLMAPGPEKVRKRSKDPRDDEC.

It belongs to the TRAFAC class TrmE-Era-EngA-EngB-Septin-like GTPase superfamily. Septin GTPase family. Septins polymerize into heterooligomeric protein complexes that form filaments, and can associate with cellular membranes, actin filaments and microtubules. GTPase activity is required for filament formation. Interacts with SEPTIN6 and SEPTIN11. Self-associates. Component of a octameric complex consisting of SEPTIN12, SEPTIN7, SEPTIN6 and SEPTIN2 or SEPTIN4 in the order 12-7-6-2-2-6-7-12 or 12-7-6-4-4-6-7-12 and located in the sperm annulus; the octamer polymerizes into filaments via the SEPTIN12 N- and C-termini; the SEPTIN12:SEPTIN7 association is mediated by the GTP-binding domains. Interacts with SPAG4 and LMNB1. Associates with alpha- and beta-tubulins. As to expression, predominantly expressed in testis and epididymis. Component of the sperm tail annulus (at protein level).

Its subcellular location is the cytoplasm. The protein resides in the cytoskeleton. It is found in the spindle. It localises to the cell projection. The protein localises to the cilium. Its subcellular location is the flagellum. In terms of biological role, filament-forming cytoskeletal GTPase. May play a role in cytokinesis (Potential). Involved in spermatogenesis. Involved in the morphogenesis of sperm heads and the elongation of sperm tails probably implicating the association with alpha- and beta-tubulins. Forms a filamentous structure with SEPTIN7, SEPTIN6, SEPTIN2 and probably SEPTIN4 at the sperm annulus which is required for the structural integrity and motility of the sperm tail during postmeiotic differentiation. The protein is Septin-12 of Rattus norvegicus (Rat).